Here is a 216-residue protein sequence, read N- to C-terminus: Holliday junction branch migration complex subunit RuvA (216 aa).

The tract at residues Met1–Lys64 is domain I. A domain II region spans residues Ser65 to Thr143. Residues Ser144–Val163 form a flexible linker region. The tract at residues Leu164–Arg216 is domain III.

It belongs to the RuvA family. As to quaternary structure, homotetramer. Forms an RuvA(8)-RuvB(12)-Holliday junction (HJ) complex. HJ DNA is sandwiched between 2 RuvA tetramers; dsDNA enters through RuvA and exits via RuvB. An RuvB hexamer assembles on each DNA strand where it exits the tetramer. Each RuvB hexamer is contacted by two RuvA subunits (via domain III) on 2 adjacent RuvB subunits; this complex drives branch migration. In the full resolvosome a probable DNA-RuvA(4)-RuvB(12)-RuvC(2) complex forms which resolves the HJ.

It localises to the cytoplasm. In terms of biological role, the RuvA-RuvB-RuvC complex processes Holliday junction (HJ) DNA during genetic recombination and DNA repair, while the RuvA-RuvB complex plays an important role in the rescue of blocked DNA replication forks via replication fork reversal (RFR). RuvA specifically binds to HJ cruciform DNA, conferring on it an open structure. The RuvB hexamer acts as an ATP-dependent pump, pulling dsDNA into and through the RuvAB complex. HJ branch migration allows RuvC to scan DNA until it finds its consensus sequence, where it cleaves and resolves the cruciform DNA. This chain is Holliday junction branch migration complex subunit RuvA, found in Francisella tularensis subsp. novicida (strain U112).